The sequence spans 356 residues: Protein-arginine kinase (356 aa).

One can recognise a Phosphagen kinase C-terminal domain in the interval 24-254 (IVLSSRIRLA…MQLIQQERAA (231 aa)). ATP contacts are provided by residues 27 to 31 (SSRIR), His91, Arg125, 176 to 180 (RASVM), and 207 to 212 (RGIYGE). An RDXXRA motif of the pArg binding pocket involved in allosteric regulation motif is present at residues 337 to 342 (RDERRA).

The protein belongs to the ATP:guanido phosphotransferase family.

It carries out the reaction L-arginyl-[protein] + ATP = N(omega)-phospho-L-arginyl-[protein] + ADP + H(+). With respect to regulation, appears to be allosterically activated by the binding of pArg-containing polypeptides to the pArg-binding pocket localized in the C-terminal domain of McsB. Its function is as follows. Catalyzes the specific phosphorylation of arginine residues in a large number of proteins. Is part of the bacterial stress response system. Protein arginine phosphorylation has a physiologically important role and is involved in the regulation of many critical cellular processes, such as protein homeostasis, motility, competence, and stringent and stress responses, by regulating gene expression and protein activity. The chain is Protein-arginine kinase from Halalkalibacterium halodurans (strain ATCC BAA-125 / DSM 18197 / FERM 7344 / JCM 9153 / C-125) (Bacillus halodurans).